The sequence spans 369 residues: Septin-5 (369 aa).

The residue at position 13 (threonine 13) is a Phosphothreonine. One can recognise a Septin-type G domain in the interval 41–314 (KGFDFTLMVA…ENYRAHCIQQ (274 aa)). The G1 motif stretch occupies residues 51 to 58 (GESGLGKS). GTP contacts are provided by residues 51 to 58 (GESGLGKS), threonine 85, and glycine 111. Residues 108-111 (DTPG) are G3 motif. The residue at position 168 (arginine 168) is an Omega-N-methylarginine. Positions 189 to 192 (AKAD) are G4 motif. Position 190–198 (190–198 (KADCLVPSE)) interacts with GTP. Serine 225 carries the phosphoserine modification. 2 residues coordinate GTP: glycine 248 and arginine 263. A Phosphoserine modification is found at serine 327. Threonine 336 is subject to Phosphothreonine. The stretch at 338–369 (DAETEKLIRMKDEELRRMQEMLQKMKQQMQDQ) forms a coiled coil.

Belongs to the TRAFAC class TrmE-Era-EngA-EngB-Septin-like GTPase superfamily. Septin GTPase family. As to quaternary structure, septins polymerize into heterooligomeric protein complexes that form filaments, and can associate with cellular membranes, actin filaments and microtubules. GTPase activity is required for filament formation. Interacts with SEPTIN2 and SEPTIN5. Interaction with SEPTIN4 not detected. In platelets, associated with a complex containing STX4. Interacts with PRKN; this interaction leads to SEPTIN5 ubiquitination and degradation. Interacts with DYRK1A. Interacts with STX1A; in the cerebellar cortex. In terms of processing, phosphorylated by DYRK1A.

It localises to the cytoplasm. The protein resides in the cytoskeleton. In terms of biological role, filament-forming cytoskeletal GTPase. Involved in cytokinesis (Potential). May play a role in platelet secretion. The polypeptide is Septin-5 (Mus musculus (Mouse)).